Reading from the N-terminus, the 198-residue chain is Single-stranded DNA cytosine deaminase (198 aa).

A Bipartite nuclear localization signal motif is present at residues 1-30; the sequence is MDSLLMKQKKFLYHFKNVRWAKGRHETYLC. The tract at residues 2–26 is interaction with SUPT6H; the sequence is DSLLMKQKKFLYHFKNVRWAKGRHE. The region spanning 23–129 is the CMP/dCMP-type deaminase domain; the sequence is GRHETYLCYV…KAEPEGLRRL (107 aa). Thr-27 is modified (phosphothreonine; by PKA). Position 38 is a phosphoserine; by PKA (Ser-38). The segment at 39–42 is important for interaction with CTNNBL1; the sequence is ATSC. A Zn(2+)-binding site is contributed by His-56. Catalysis depends on Glu-58, which acts as the Proton donor. The Zn(2+) site is built by Cys-87 and Cys-90. The tract at residues 88 to 116 is required for interaction with RNF126; sequence YDCARHVAEFLRWNPNLSLRIFTARLYFC. Positions 183-198 match the Nuclear export signal motif; the sequence is LYEVDDLRDAFRMLGF.

This sequence belongs to the cytidine and deoxycytidylate deaminase family. In terms of assembly, interacts with CTNNBL1; the interaction is important for the immunoglobulin switch activity of AICDA. Interacts (via its NLS) with KPNA1. Interacts with PKA/PRKACA and PRKAR1A/PKR1. Interacts with SUPT6H, TRIM28 and NCL. Directly interacts with MCM3AP/GANP; this interaction may favor AICDA recruitment to immunoglobulin variable region genes, hence promoting somatic hypermutations. Zn(2+) is required as a cofactor. Ser-38 is the major site whereas Thr-27 is the minor site of phosphorylation. Phosphorylation regulates its class-switch recombination activity. In terms of processing, probably monoubiquitinated on several residues by RNF126. As to expression, expressed in germinal center B-cells (at protein level).

The protein resides in the nucleus. Its subcellular location is the cytoplasm. The enzyme catalyses a 2'-deoxycytidine in single-stranded DNA + H2O + H(+) = a 2'-deoxyuridine in single-stranded DNA + NH4(+). Its function is as follows. Single-stranded DNA-specific cytidine deaminase. Involved in somatic hypermutation (SHM), gene conversion, and class-switch recombination (CSR) in B-lymphocytes by deaminating C to U during transcription of Ig-variable (V) and Ig-switch (S) region DNA. Required for several crucial steps of B-cell terminal differentiation necessary for efficient antibody responses. May also play a role in the epigenetic regulation of gene expression by participating in DNA demethylation. The protein is Single-stranded DNA cytosine deaminase (Aicda) of Mus musculus (Mouse).